The following is a 308-amino-acid chain: Phosphoribosylaminoimidazole-succinocarboxamide synthase (308 aa).

The protein belongs to the SAICAR synthetase family.

It carries out the reaction 5-amino-1-(5-phospho-D-ribosyl)imidazole-4-carboxylate + L-aspartate + ATP = (2S)-2-[5-amino-1-(5-phospho-beta-D-ribosyl)imidazole-4-carboxamido]succinate + ADP + phosphate + 2 H(+). The protein operates within purine metabolism; IMP biosynthesis via de novo pathway; 5-amino-1-(5-phospho-D-ribosyl)imidazole-4-carboxamide from 5-amino-1-(5-phospho-D-ribosyl)imidazole-4-carboxylate: step 1/2. The sequence is that of Phosphoribosylaminoimidazole-succinocarboxamide synthase from Xylella fastidiosa (strain 9a5c).